A 500-amino-acid chain; its full sequence is Glycerol kinase (500 aa).

An ADP-binding site is contributed by T13. ATP contacts are provided by T13, T14, and S15. T13 contributes to the sn-glycerol 3-phosphate binding site. R17 contacts ADP. Sn-glycerol 3-phosphate-binding residues include R83, E84, Y135, and D244. R83, E84, Y135, D244, and Q245 together coordinate glycerol. ADP-binding residues include T266 and G309. Residues T266, G309, Q313, and G410 each coordinate ATP. ADP-binding residues include G410 and N414.

The protein belongs to the FGGY kinase family.

The catalysed reaction is glycerol + ATP = sn-glycerol 3-phosphate + ADP + H(+). The protein operates within polyol metabolism; glycerol degradation via glycerol kinase pathway; sn-glycerol 3-phosphate from glycerol: step 1/1. Its activity is regulated as follows. Inhibited by fructose 1,6-bisphosphate (FBP). Its function is as follows. Key enzyme in the regulation of glycerol uptake and metabolism. Catalyzes the phosphorylation of glycerol to yield sn-glycerol 3-phosphate. The sequence is that of Glycerol kinase from Burkholderia ambifaria (strain MC40-6).